The following is a 321-amino-acid chain: Cytochrome c biogenesis protein CcsA (321 aa).

Helical transmembrane passes span isoleucine 17–leucine 37, lysine 43–serine 63, leucine 71–isoleucine 91, leucine 98–leucine 118, methionine 143–isoleucine 163, valine 225–asparagine 245, glutamate 258–arginine 275, and alanine 286–leucine 306.

It belongs to the CcmF/CycK/Ccl1/NrfE/CcsA family. As to quaternary structure, may interact with Ccs1.

It is found in the plastid. It localises to the chloroplast thylakoid membrane. Its function is as follows. Required during biogenesis of c-type cytochromes (cytochrome c6 and cytochrome f) at the step of heme attachment. This chain is Cytochrome c biogenesis protein CcsA, found in Platanus occidentalis (Sycamore).